We begin with the raw amino-acid sequence, 631 residues long: Probable potassium transport system protein Kup (631 aa).

The next 12 helical transmembrane spans lie at 17 to 37 (IGLL…SPLY), 56 to 76 (ILGV…FKYM), 109 to 129 (MMMV…SMIT), 147 to 167 (GLDH…FLIQ), 174 to 194 (IGVL…ALGV), 215 to 235 (FFII…LALT), 256 to 276 (WFIL…ALVL), 288 to 308 (LLAP…ATII), 346 to 366 (IYIG…VIGF), 378 to 398 (VAVT…MLML), 403 to 423 (PLLA…FFAA), and 428 to 448 (IFQG…LMTT).

Belongs to the HAK/KUP transporter (TC 2.A.72) family.

Its subcellular location is the cell inner membrane. It catalyses the reaction K(+)(in) + H(+)(in) = K(+)(out) + H(+)(out). Functionally, transport of potassium into the cell. Likely operates as a K(+):H(+) symporter. This Pseudomonas syringae pv. tomato (strain ATCC BAA-871 / DC3000) protein is Probable potassium transport system protein Kup.